We begin with the raw amino-acid sequence, 238 residues long: CD63 antigen (238 aa).

Topologically, residues 1–11 are cytoplasmic; the sequence is MAVEGGMKCVK. A helical membrane pass occupies residues 12–32; that stretch reads FLLYVLLLAFCACAVGLIAVG. At 33–51 the chain is on the extracellular side; sequence VGAQLVLSQTITHGATPGS. A helical transmembrane segment spans residues 52–72; it reads LLPVVIIAVGAFLFLVAFVGC. The Cytoplasmic segment spans residues 73–81; it reads CGTCKENYC. Residues 82-102 traverse the membrane as a helical segment; sequence LMITFAIFLSLIMLVEVAAAI. Residues 103–203 are Extracellular-facing; sequence AGYVFRDKVM…KIGLWLRKNV (101 aa). N-linked (GlcNAc...) asparagine glycosylation is found at N125, N130, N150, and N172. The chain crosses the membrane as a helical span at residues 204-224; it reads LVVAAAALGIAFVEVLGIVFA. Residues 225–238 lie on the Cytoplasmic side of the membrane; that stretch reads CCLVKSIRSGYEVM. Positions 234-238 match the Lysosomal targeting motif motif; it reads GYEVM.

This sequence belongs to the tetraspanin (TM4SF) family. Interacts with TIMP1 and ITGB1 and recruits TIMP1 to ITGB1. Interacts with CD9. Identified in a complex with CD9 and ITGB3. Interacts with PMEL. Interacts with KDR/VEGFR2; identified in a complex with ITGB1 and KDR/VEGFR2 and is required to recruit KDR to ITGB1 complexes. Interacts with SYT7. Post-translationally, palmitoylated at a low, basal level in unstimulated platelets. The level of palmitoylation increases when platelets are activated by thrombin (in vitro).

The protein resides in the cell membrane. It is found in the lysosome membrane. It localises to the late endosome membrane. The protein localises to the endosome. Its subcellular location is the multivesicular body. The protein resides in the melanosome. It is found in the secreted. It localises to the extracellular exosome. The protein localises to the cell surface. Functions as a cell surface receptor for TIMP1 and plays a role in the activation of cellular signaling cascades. Plays a role in the activation of ITGB1 and integrin signaling, leading to the activation of AKT, FAK/PTK2 and MAP kinases. Promotes cell survival, reorganization of the actin cytoskeleton, cell adhesion, spreading and migration, via its role in the activation of AKT and FAK/PTK2. Plays a role in VEGFA signaling via its role in regulating the internalization of KDR/VEGFR2. Plays a role in intracellular vesicular transport processes, and is required for normal trafficking of the PMEL luminal domain that is essential for the development and maturation of melanocytes. Plays a role in the adhesion of leukocytes onto endothelial cells via its role in the regulation of SELP trafficking. May play a role in mast cell degranulation in response to Ms4a2/FceRI stimulation, but not in mast cell degranulation in response to other stimuli. The protein is CD63 antigen (CD63) of Oryctolagus cuniculus (Rabbit).